We begin with the raw amino-acid sequence, 7839 residues long: Nonribosomal peptide synthetase GRA1 (7839 aa).

Polar residues predominate over residues Met-1–Gly-23. Residues Met-1–Glu-26 are disordered. The tract at residues Leu-264–Ile-650 is adenylation 1. In terms of domain architecture, Carrier 1 spans Ser-793–Lys-866. The residue at position 827 (Ser-827) is an O-(pantetheine 4'-phosphoryl)serine. The condensation 1 stretch occupies residues Asp-916–Ile-1332. The segment at Phe-1351–Arg-1742 is adenylation 2. Positions Glu-1880–Asp-1957 constitute a Carrier 2 domain. Ser-1918 is subject to O-(pantetheine 4'-phosphoryl)serine. The segment at Asp-1997–Ile-2413 is condensation 2. The segment at Phe-2432–Arg-2828 is adenylation 3. The Carrier 3 domain maps to Ile-2963–Thr-3040. Residue Ser-3001 is modified to O-(pantetheine 4'-phosphoryl)serine. Residues Asp-3084 to His-3496 form a condensation 3 region. The adenylation 4 stretch occupies residues Arg-3520–Arg-3923. Residues Arg-4057–Ser-4134 form the Carrier 4 domain. Residue Ser-4095 is modified to O-(pantetheine 4'-phosphoryl)serine. The interval Asn-4234–Ile-4569 is condensation 4. Positions His-4591–Phe-4982 are adenylation 5. Residues Ala-5113–Gln-5189 form the Carrier 5 domain. An O-(pantetheine 4'-phosphoryl)serine modification is found at Ser-5150. Residues Glu-5224–Leu-5653 form a condensation 5 region. The adenylation 6 stretch occupies residues Phe-5671–Arg-6069. The Carrier 6 domain maps to Phe-6207–Thr-6282. The residue at position 6243 (Ser-6243) is an O-(pantetheine 4'-phosphoryl)serine. The tract at residues Gln-6321–Pro-6730 is condensation 6. The segment at Glu-6756–Leu-7147 is adenylation 7. In terms of domain architecture, Carrier 7 spans Lys-7290–Ile-7366. Residue Ser-7327 is modified to O-(pantetheine 4'-phosphoryl)serine. Positions His-7404–Ser-7704 are condensation7.

This sequence belongs to the NRP synthetase family.

It participates in mycotoxin biosynthesis. Functionally, nonribosomal peptide synthetase; part of the gene cluster that mediates the biosynthesis of gramillins A and B, bicyclic lipopeptides that induce cell death in maize leaves but not in wheat leaves. The nonribosomal peptide synthetase GRA1 incorporates respectively a glutamic adic (Glu), a leucine (Leu), a serine (Ser), a hydroxyglutamine (HOGln), a 2-amino decanoic acid, and 2 cysteins (CysB and CysA). The biosynthesis of 2-amino decanoic acid incorporated in gramillins could be initiated by a fatty acid synthase composed of the alpha and beta subunits FGSG_00036 and FGSG_11656. The cytochrome P450 monooxygenase FGSG_15680 could hydroxylate the fatty acid chain. Subsequent oxidation to the ketone by the oxidoreductase FGSG_00048 and transamination by aminotransferase FGSG_00049 could form 2-amino-decanoic acid. On the other hand, FGSG_15680 could also be responsible for the HO-modified glutamine at the gamma-position. Whether hydroxylation occurs on the fully assembled product or on the Gln residue prior to assembly into the gramillins requires further proof. The thioredoxin FGSG_00043 could also be required for the disulfide-bond formation between CysA and CysB. The specific involvement of the remaining proteins from the cluster is more difficult to discern, but could have broader regulatory (FGSG_00040 and FGSG_11657) or enzymatic functions (FGSG_00044 and FGSG_00045). The final C-domain of GRA1 does not possess the expected sequence of a termination CT domain, often implicated in macrocyclization and release of a cyclopeptidein fungal NRPs; and the thioesterase FGSG_00047 may act in concert with the terminal C-domain of GRA1 to catalyze the formation of the macrocyclic anhydride and release of the products. The protein is Nonribosomal peptide synthetase GRA1 of Gibberella zeae (strain ATCC MYA-4620 / CBS 123657 / FGSC 9075 / NRRL 31084 / PH-1) (Wheat head blight fungus).